We begin with the raw amino-acid sequence, 69 residues long: Mu-conotoxin-like Am3.3 (69 aa).

The signal sequence occupies residues 1 to 20 (MMSKLGVLLTICLLLFPLTA). Residues 21–52 (VPLDGDQPADRPAERMQDDISSENHPMFDAIR) constitute a propeptide that is removed on maturation. The residue at position 68 (Cys-68) is a Cysteine amide.

This sequence belongs to the conotoxin M family. Post-translationally, is not hydroxylated. Contains 3 disulfide bonds. Expressed by the venom duct.

The protein resides in the secreted. In terms of biological role, mu-conotoxins block voltage-gated sodium channels (Nav). The protein is Mu-conotoxin-like Am3.3 of Conus amadis (Amadis cone).